The sequence spans 354 residues: Selection and upkeep of intraepithelial T-cells protein 10 (354 aa).

The signal sequence occupies residues 1-52 (MFLRTQMEQSQADIFALIKPHFGVMESSASYLPGFFMTFLLLQTTVLTQAMS). The region spanning 53–141 (LDIQINIQVP…TNREKKRSVV (89 aa)) is the Ig-like V-type domain. Residues 53–158 (LDIQINIQVP…SEYMSLMSNK (106 aa)) are Extracellular-facing. Cys-71 and Cys-125 are oxidised to a cystine. Asn-129 carries an N-linked (GlcNAc...) asparagine glycan. A helical transmembrane segment spans residues 159–179 (FSCPLTYLFIIIFLNCLKGML). The Cytoplasmic portion of the chain corresponds to 180–209 (DFCCLKGKPVYFRELINKIKEVLNIKMRAC). The helical transmembrane segment at 210–230 (CTLIWEFLLIVLYIAFLPFYL) threads the bilayer. Topologically, residues 231-252 (KFRSRASILDDAYPLHSNWLWD) are extracellular. The chain crosses the membrane as a helical span at residues 253-273 (ICIVLSVLMIFFTGLSLFLLW). The Cytoplasmic portion of the chain corresponds to 274–354 (TLNCYGQMSY…RLDCSLNWKT (81 aa)).

The protein belongs to the SKINT family. In terms of tissue distribution, expressed in skin and thymus.

Its subcellular location is the membrane. Functionally, may act by engaging a cell surface molecule on immature T-cells in the embryonic thymus. The sequence is that of Selection and upkeep of intraepithelial T-cells protein 10 (Skint10) from Mus musculus (Mouse).